Here is a 104-residue protein sequence, read N- to C-terminus: DET1- and DDB1-associated protein 1 (104 aa).

Basic and acidic residues predominate over residues 67–77 (KKNAAKKREQE). Residues 67-104 (KKNAAKKREQEQAEGEGGSPAPPRKIARTDSQEMNEDS) form a disordered region.

Belongs to the DDA1 family. As to quaternary structure, component of numerous DCX (DDB1-CUL4-X-box) E3 ubiquitin-protein ligase complexes which consist of a core of DDB1, cullin-4 (CUL4A or CUL4B), DDA1 and RBX1.

The protein operates within protein modification; protein ubiquitination. In terms of biological role, functions as a component of numerous distinct DCX (DDB1-CUL4-X-box) E3 ubiquitin-protein ligase complexes which mediate the ubiquitination and subsequent proteasomal degradation of target proteins. In the DCX complexes, acts as a scaffolding subunit required to stabilize the complex. This Danio rerio (Zebrafish) protein is DET1- and DDB1-associated protein 1.